Consider the following 239-residue polypeptide: ATP-dependent dethiobiotin synthetase BioD (239 aa).

An ATP-binding site is contributed by 15–20; the sequence is EIGKTF. Position 19 (Thr19) interacts with Mg(2+). Lys40 is an active-site residue. Residues Asp57, 118 to 121, and 178 to 179 contribute to the ATP site; these read EGVG and NH. Positions 57 and 118 each coordinate Mg(2+).

Belongs to the dethiobiotin synthetase family. In terms of assembly, homodimer. Mg(2+) serves as cofactor.

The protein resides in the cytoplasm. It carries out the reaction (7R,8S)-7,8-diammoniononanoate + CO2 + ATP = (4R,5S)-dethiobiotin + ADP + phosphate + 3 H(+). Its pathway is cofactor biosynthesis; biotin biosynthesis; biotin from 7,8-diaminononanoate: step 1/2. Its function is as follows. Catalyzes a mechanistically unusual reaction, the ATP-dependent insertion of CO2 between the N7 and N8 nitrogen atoms of 7,8-diaminopelargonic acid (DAPA, also called 7,8-diammoniononanoate) to form a ureido ring. The chain is ATP-dependent dethiobiotin synthetase BioD from Burkholderia multivorans (strain ATCC 17616 / 249).